Here is a 178-residue protein sequence, read N- to C-terminus: Killin (178 aa).

Residues 8–50 (SARPGRTVHVWGYRVEWKVRNGRKLQPSEWAGRGDLGGFKRRW) mediate DNA binding.

The protein resides in the nucleus. In terms of biological role, DNA-binding protein involved in S phase checkpoint control-coupled apoptosis by mediating p53/TP53-induced apoptosis. Has the ability to inhibit DNA synthesis and S phase arrest coupled to apoptosis. Has affinity to both double- and single-stranded DNA. The chain is Killin (KLLN) from Homo sapiens (Human).